Reading from the N-terminus, the 264-residue chain is MKAVLLVVAALFLAGSQARHFWQQDDPKTSWDVVKEFANKYVDAVKESGKGYVEQLDASSLGQQLNLRLSDNWDTLSTILTKLQADFGLATQEFWDTLEKETEWLKQIVSEDLQDVKHKVQPYLENFQKKVQEEVEHYREKVRPLGIELRDGARQKLQELQEKLTPLGEDLRDRTREHVDVLRTQLAPFSEEMRQRLAKRLEELKDSATLADYHAKASEHLKMLGEKAKPALEDLRQGLLPVLENLKASILSSIDQASKQLAAQ.

The signal sequence occupies residues 1 to 18 (MKAVLLVVAALFLAGSQA). 2 consecutive repeat copies span residues 67 to 88 (LRLS…ADFG) and 89 to 110 (LATQ…QIVS). Positions 67–264 (LRLSDNWDTL…DQASKQLAAQ (198 aa)) are 10 X approximate tandem repeats. A 3; half-length repeat occupies 111–121 (EDLQDVKHKVQ). A run of 5 repeats spans residues 122–143 (PYLE…EKVR), 144–165 (PLGI…EKLT), 166–187 (PLGE…TQLA), 188–207 (PFSE…LKDS), and 208–229 (ATLA…EKAK). A Methionine sulfoxide modification is found at M193. One copy of the 9; half-length repeat lies at 230 to 240 (PALEDLRQGLL). Residues 241–264 (PVLENLKASILSSIDQASKQLAAQ) form repeat 10.

The protein belongs to the apolipoprotein A1/A4/E family. Homodimer. Interacts with APOA1BP and CLU. Component of a sperm activating protein complex (SPAP), consisting of APOA1, an immunoglobulin heavy chain, an immunoglobulin light chain and albumin. Interacts with NDRG1. Interacts with SCGB3A2. Interacts with NAXE and YJEFN3. In terms of processing, glycosylated. Palmitoylated. Post-translationally, phosphorylation sites are present in the extracellular medium.

It is found in the secreted. Its function is as follows. Participates in the reverse transport of cholesterol from tissues to the liver for excretion by promoting cholesterol efflux from tissues and by acting as a cofactor for the lecithin cholesterol acyltransferase (LCAT). As part of the SPAP complex, activates spermatozoa motility. This is Apolipoprotein A-I (APOA1) from Cavia porcellus (Guinea pig).